Reading from the N-terminus, the 158-residue chain is 2-C-methyl-D-erythritol 2,4-cyclodiphosphate synthase (158 aa).

2 residues coordinate a divalent metal cation: D8 and H10. 4-CDP-2-C-methyl-D-erythritol 2-phosphate contacts are provided by residues 8–10 and 34–35; these read DVH and HS. H42 contributes to the a divalent metal cation binding site. 4-CDP-2-C-methyl-D-erythritol 2-phosphate-binding positions include 56-58, 61-65, 100-106, 132-135, F139, and R142; these read DIG, FPDTD, AQRPKMA, and TTEE.

It belongs to the IspF family. As to quaternary structure, homotrimer. A divalent metal cation is required as a cofactor.

It catalyses the reaction 4-CDP-2-C-methyl-D-erythritol 2-phosphate = 2-C-methyl-D-erythritol 2,4-cyclic diphosphate + CMP. It functions in the pathway isoprenoid biosynthesis; isopentenyl diphosphate biosynthesis via DXP pathway; isopentenyl diphosphate from 1-deoxy-D-xylulose 5-phosphate: step 4/6. Functionally, involved in the biosynthesis of isopentenyl diphosphate (IPP) and dimethylallyl diphosphate (DMAPP), two major building blocks of isoprenoid compounds. Catalyzes the conversion of 4-diphosphocytidyl-2-C-methyl-D-erythritol 2-phosphate (CDP-ME2P) to 2-C-methyl-D-erythritol 2,4-cyclodiphosphate (ME-CPP) with a corresponding release of cytidine 5-monophosphate (CMP). The polypeptide is 2-C-methyl-D-erythritol 2,4-cyclodiphosphate synthase (Pelobacter propionicus (strain DSM 2379 / NBRC 103807 / OttBd1)).